A 101-amino-acid polypeptide reads, in one-letter code: Urease subunit beta (101 aa).

It belongs to the urease beta subunit family. As to quaternary structure, heterotrimer of UreA (gamma), UreB (beta) and UreC (alpha) subunits. Three heterotrimers associate to form the active enzyme.

The protein resides in the cytoplasm. The catalysed reaction is urea + 2 H2O + H(+) = hydrogencarbonate + 2 NH4(+). The protein operates within nitrogen metabolism; urea degradation; CO(2) and NH(3) from urea (urease route): step 1/1. In Rhodopseudomonas palustris (strain HaA2), this protein is Urease subunit beta.